Here is a 704-residue protein sequence, read N- to C-terminus: uncharacterized protein (704 aa).

This is an uncharacterized protein from Rickettsia conorii (strain ATCC VR-613 / Malish 7).